Consider the following 354-residue polypeptide: Alpha-D-ribose 1-methylphosphonate 5-triphosphate synthase subunit PhnI (354 aa).

Belongs to the PhnI family. In terms of assembly, forms a complex with PhnG, PhnH, PhnJ and PhnK with the suggested composition PhnG(4)H(2)I(2)J(2)K.

It carries out the reaction methylphosphonate + ATP = alpha-D-ribose 1-methylphosphonate 5-triphosphate + adenine. The catalysed reaction is ATP + H2O = D-ribose 5-triphosphate + adenine. Functionally, together with PhnG, PhnH and PhnL is required for the transfer of the ribose triphosphate moiety from ATP to methyl phosphonate. PhnI alone has nucleosidase activity, catalyzing the hydrolysis of ATP or GTP forming alpha-D-ribose 5-triphosphate and adenine or guanine, respectively. The chain is Alpha-D-ribose 1-methylphosphonate 5-triphosphate synthase subunit PhnI (phnI) from Escherichia coli (strain K12).